The primary structure comprises 102 residues: Small ribosomal subunit protein uS10 (102 aa).

Residues threonine 30–threonine 58 form a disordered region.

This sequence belongs to the universal ribosomal protein uS10 family. In terms of assembly, part of the 30S ribosomal subunit.

Functionally, involved in the binding of tRNA to the ribosomes. In Haloquadratum walsbyi (strain DSM 16790 / HBSQ001), this protein is Small ribosomal subunit protein uS10.